The sequence spans 380 residues: Histidinol-phosphate aminotransferase (380 aa).

Lys235 bears the N6-(pyridoxal phosphate)lysine mark.

The protein belongs to the class-II pyridoxal-phosphate-dependent aminotransferase family. Histidinol-phosphate aminotransferase subfamily. As to quaternary structure, homodimer. The cofactor is pyridoxal 5'-phosphate.

The catalysed reaction is L-histidinol phosphate + 2-oxoglutarate = 3-(imidazol-4-yl)-2-oxopropyl phosphate + L-glutamate. Its pathway is amino-acid biosynthesis; L-histidine biosynthesis; L-histidine from 5-phospho-alpha-D-ribose 1-diphosphate: step 7/9. This chain is Histidinol-phosphate aminotransferase, found in Rhodococcus jostii (strain RHA1).